A 235-amino-acid chain; its full sequence is Small ribosomal subunit protein uS3 (235 aa).

In terms of domain architecture, KH type-2 spans 39–107 (IRDFIKKECH…ELHLNIVEVR (69 aa)). The interval 213-235 (AARDRKAQELQDGPAPRGAGGRR) is disordered.

The protein belongs to the universal ribosomal protein uS3 family. In terms of assembly, part of the 30S ribosomal subunit. Forms a tight complex with proteins S10 and S14.

In terms of biological role, binds the lower part of the 30S subunit head. Binds mRNA in the 70S ribosome, positioning it for translation. This Roseobacter denitrificans (strain ATCC 33942 / OCh 114) (Erythrobacter sp. (strain OCh 114)) protein is Small ribosomal subunit protein uS3.